Reading from the N-terminus, the 318-residue chain is 4-hydroxy-3-methylbut-2-enyl diphosphate reductase (318 aa).

Position 12 (C12) interacts with [4Fe-4S] cluster. H41 and H74 together coordinate (2E)-4-hydroxy-3-methylbut-2-enyl diphosphate. H41 and H74 together coordinate dimethylallyl diphosphate. Positions 41 and 74 each coordinate isopentenyl diphosphate. Residue C96 coordinates [4Fe-4S] cluster. H124 is a (2E)-4-hydroxy-3-methylbut-2-enyl diphosphate binding site. A dimethylallyl diphosphate-binding site is contributed by H124. H124 serves as a coordination point for isopentenyl diphosphate. The Proton donor role is filled by E126. Position 167 (T167) interacts with (2E)-4-hydroxy-3-methylbut-2-enyl diphosphate. C197 contributes to the [4Fe-4S] cluster binding site. 4 residues coordinate (2E)-4-hydroxy-3-methylbut-2-enyl diphosphate: S225, S226, N227, and S269. Residues S225, S226, N227, and S269 each contribute to the dimethylallyl diphosphate site. Isopentenyl diphosphate contacts are provided by S225, S226, N227, and S269.

It belongs to the IspH family. [4Fe-4S] cluster is required as a cofactor.

It catalyses the reaction isopentenyl diphosphate + 2 oxidized [2Fe-2S]-[ferredoxin] + H2O = (2E)-4-hydroxy-3-methylbut-2-enyl diphosphate + 2 reduced [2Fe-2S]-[ferredoxin] + 2 H(+). The enzyme catalyses dimethylallyl diphosphate + 2 oxidized [2Fe-2S]-[ferredoxin] + H2O = (2E)-4-hydroxy-3-methylbut-2-enyl diphosphate + 2 reduced [2Fe-2S]-[ferredoxin] + 2 H(+). The protein operates within isoprenoid biosynthesis; dimethylallyl diphosphate biosynthesis; dimethylallyl diphosphate from (2E)-4-hydroxy-3-methylbutenyl diphosphate: step 1/1. Its pathway is isoprenoid biosynthesis; isopentenyl diphosphate biosynthesis via DXP pathway; isopentenyl diphosphate from 1-deoxy-D-xylulose 5-phosphate: step 6/6. Catalyzes the conversion of 1-hydroxy-2-methyl-2-(E)-butenyl 4-diphosphate (HMBPP) into a mixture of isopentenyl diphosphate (IPP) and dimethylallyl diphosphate (DMAPP). Acts in the terminal step of the DOXP/MEP pathway for isoprenoid precursor biosynthesis. The protein is 4-hydroxy-3-methylbut-2-enyl diphosphate reductase of Francisella tularensis subsp. holarctica (strain LVS).